A 773-amino-acid polypeptide reads, in one-letter code: Elongin-A (773 aa).

The region spanning 4–79 (ESALQVVEKL…AQWKKLVPVE (76 aa)) is the TFIIS N-terminal domain. Residues 79–93 (ERNNEAEDQDFEKSN) are compositionally biased toward basic and acidic residues. The disordered stretch occupies residues 79–480 (ERNNEAEDQD…PRKVPTDVLP (402 aa)). Polar residues predominate over residues 112 to 124 (YQESWQASGSQPY). Positions 136 to 156 (LPELERPHKVAHGHERRDERK) are enriched in basic and acidic residues. Residues 162 to 174 (SPPYSSDPESSDY) are compositionally biased toward low complexity. Serine 195 is subject to Phosphoserine. The segment covering 239-248 (KPHKSSHKEK) has biased composition (basic residues). Composition is skewed to basic and acidic residues over residues 249 to 265 (RPVD…MGRE) and 271 to 304 (SSKE…EGNS). A Phosphoserine modification is found at serine 310. Composition is skewed to basic and acidic residues over residues 317-339 (SDNH…KNKQ) and 368-380 (QEGK…DRKS). A phosphoserine mark is found at serine 380 and serine 383. N6-acetyllysine is present on lysine 430. Serine 515 bears the Phosphoserine mark. The activation domain stretch occupies residues 521-680 (EAGFTGRRMN…PPRDVRRRQE (160 aa)). The tract at residues 549-558 (TLHQQCIRVL) is BC-box. The 45-residue stretch at 565–609 (IFEVGGVPYSVLEPVLERCTPDQLYRIEECNHVLIEETDQLWKVH) folds into the F-box domain. A disordered region spans residues 671 to 747 (PPRDVRRRQE…VASSSVSYDP (77 aa)). Low complexity predominate over residues 704 to 718 (SSHVPASNSSSSFHS). A compositionally biased stretch (polar residues) spans 728-744 (PSTSSAHLAPVASSSVS).

In terms of assembly, heterotrimer of an A (ELOA, ELOA2 or ELOA3P), ELOB and ELOC subunit. Part of a multisubunit ubiquitin ligase complex consisting of elongin BC complex (ELOB and ELOC), elongin A/ELOA, RBX1 and CUL5. Interacts with ERCC6; the interaction is induced by DNA damaging agents or inhibitors of RNA polymerase II elongation. Interacts (via BC-box) with CUL5.

The protein localises to the nucleus. SIII, also known as elongin, is a general transcription elongation factor that increases the RNA polymerase II transcription elongation past template-encoded arresting sites. Subunit A is transcriptionally active and its transcription activity is strongly enhanced by binding to the dimeric complex of the SIII regulatory subunits B and C (elongin BC complex). Functionally, as part of a multisubunit complex composed of elongin BC complex (ELOB and ELOC), elongin A/ELOA, RBX1 and CUL5; polyubiquitinates monoubiquitinated POLR2A. In Rattus norvegicus (Rat), this protein is Elongin-A (Eloa).